The following is a 186-amino-acid chain: ATP synthase subunit delta (186 aa).

The protein belongs to the ATPase delta chain family. In terms of assembly, F-type ATPases have 2 components, F(1) - the catalytic core - and F(0) - the membrane proton channel. F(1) has five subunits: alpha(3), beta(3), gamma(1), delta(1), epsilon(1). F(0) has three main subunits: a(1), b(2) and c(10-14). The alpha and beta chains form an alternating ring which encloses part of the gamma chain. F(1) is attached to F(0) by a central stalk formed by the gamma and epsilon chains, while a peripheral stalk is formed by the delta and b chains.

The protein resides in the cell inner membrane. Functionally, f(1)F(0) ATP synthase produces ATP from ADP in the presence of a proton or sodium gradient. F-type ATPases consist of two structural domains, F(1) containing the extramembraneous catalytic core and F(0) containing the membrane proton channel, linked together by a central stalk and a peripheral stalk. During catalysis, ATP synthesis in the catalytic domain of F(1) is coupled via a rotary mechanism of the central stalk subunits to proton translocation. In terms of biological role, this protein is part of the stalk that links CF(0) to CF(1). It either transmits conformational changes from CF(0) to CF(1) or is implicated in proton conduction. This Mesorhizobium japonicum (strain LMG 29417 / CECT 9101 / MAFF 303099) (Mesorhizobium loti (strain MAFF 303099)) protein is ATP synthase subunit delta.